Consider the following 230-residue polypeptide: Orotidine 5'-phosphate decarboxylase (230 aa).

Substrate-binding positions include aspartate 11, lysine 34, 61 to 70 (DLKLHDIPNT), threonine 117, arginine 179, glutamine 188, glycine 208, and arginine 209. The active-site Proton donor is the lysine 63.

The protein belongs to the OMP decarboxylase family. Type 1 subfamily. Homodimer.

It catalyses the reaction orotidine 5'-phosphate + H(+) = UMP + CO2. Its pathway is pyrimidine metabolism; UMP biosynthesis via de novo pathway; UMP from orotate: step 2/2. Functionally, catalyzes the decarboxylation of orotidine 5'-monophosphate (OMP) to uridine 5'-monophosphate (UMP). The protein is Orotidine 5'-phosphate decarboxylase of Streptococcus pyogenes serotype M18 (strain MGAS8232).